A 372-amino-acid chain; its full sequence is Methylthioribose-1-phosphate isomerase 1 (372 aa).

The active-site Proton donor is D254.

It belongs to the eIF-2B alpha/beta/delta subunits family. MtnA subfamily.

Its subcellular location is the cytoplasm. It localises to the nucleus. It catalyses the reaction 5-(methylsulfanyl)-alpha-D-ribose 1-phosphate = 5-(methylsulfanyl)-D-ribulose 1-phosphate. It functions in the pathway amino-acid biosynthesis; L-methionine biosynthesis via salvage pathway; L-methionine from S-methyl-5-thio-alpha-D-ribose 1-phosphate: step 1/6. Its function is as follows. Catalyzes the interconversion of methylthioribose-1-phosphate (MTR-1-P) into methylthioribulose-1-phosphate (MTRu-1-P). The polypeptide is Methylthioribose-1-phosphate isomerase 1 (Trypanosoma cruzi (strain CL Brener)).